The primary structure comprises 113 residues: uncharacterized protein (113 aa).

A helical transmembrane segment spans residues 7-29; that stretch reads FFILIVLLFTVFSLKEFIPNTFC.

It is found in the membrane. This is an uncharacterized protein from Aquifex aeolicus (strain VF5).